The following is a 142-amino-acid chain: Large ribosomal subunit protein uL11 (142 aa).

The protein belongs to the universal ribosomal protein uL11 family. Part of the ribosomal stalk of the 50S ribosomal subunit. Interacts with L10 and the large rRNA to form the base of the stalk. L10 forms an elongated spine to which L12 dimers bind in a sequential fashion forming a multimeric L10(L12)X complex. In terms of processing, one or more lysine residues are methylated.

Functionally, forms part of the ribosomal stalk which helps the ribosome interact with GTP-bound translation factors. In Erwinia tasmaniensis (strain DSM 17950 / CFBP 7177 / CIP 109463 / NCPPB 4357 / Et1/99), this protein is Large ribosomal subunit protein uL11.